The following is a 437-amino-acid chain: Keratin, type I cytoskeletal 13 (437 aa).

Residues 1 to 95 are head; sequence MSCRFQSSSM…GVDGGLLSGN (95 aa). Omega-N-methylarginine is present on residues Arg-27 and Arg-35. The segment at 96 to 131 is coil 1A; sequence EKITMQNLNDRLASYLDKVRALEAANADLEVKIRDW. In terms of domain architecture, IF rod spans 96–408; it reads EKITMQNLND…SLLEGQDAKM (313 aa). A linker 1 region spans residues 132 to 150; the sequence is HLKQSPASPERDYSAYYKT. Positions 151–242 are coil 1B; it reads IEELRIKILE…KNHEEEMKEF (92 aa). Positions 243 to 265 are linker 12; the sequence is SNQVVGQVNVEMDATPGIDLTRV. The segment at 266 to 404 is coil 2; that stretch reads LAEMREQYEA…ATYRSLLEGQ (139 aa). The interval 405–437 is tail; that stretch reads DAKMTGFNSGGNNTTTSNGSPSSNSGRPDFRKY. A disordered region spans residues 408 to 437; it reads MTGFNSGGNNTTTSNGSPSSNSGRPDFRKY. Residues 409-430 show a composition bias toward low complexity; the sequence is TGFNSGGNNTTTSNGSPSSNSG.

It belongs to the intermediate filament family. Heterotetramer of two type I and two type II keratins. O-glycosylated; glycans consist of single N-acetylglucosamine residues. Expressed in tongue epithelia (at protein level). Expressed in upper suprabasal layers of the corneal epithelium (at protein level).

Its function is as follows. Type 1 keratin. Maintains postnatal tongue mucosal cell homeostasis and tissue organization in response to mechanical stress, potentially via regulation of the G1/S phase cyclins CCNE1 and CCNE2. The sequence is that of Keratin, type I cytoskeletal 13 (Krt13) from Mus musculus (Mouse).